A 638-amino-acid chain; its full sequence is Phosphomethylpyrimidine synthase (638 aa).

Substrate contacts are provided by residues asparagine 243, methionine 272, tyrosine 301, histidine 337, 357 to 359 (SRG), 398 to 401 (DGLR), and glutamate 437. Histidine 441 is a binding site for Zn(2+). Tyrosine 464 is a binding site for substrate. Histidine 505 lines the Zn(2+) pocket. 3 residues coordinate [4Fe-4S] cluster: cysteine 585, cysteine 588, and cysteine 593.

This sequence belongs to the ThiC family. Homodimer. The cofactor is [4Fe-4S] cluster.

The enzyme catalyses 5-amino-1-(5-phospho-beta-D-ribosyl)imidazole + S-adenosyl-L-methionine = 4-amino-2-methyl-5-(phosphooxymethyl)pyrimidine + CO + 5'-deoxyadenosine + formate + L-methionine + 3 H(+). It participates in cofactor biosynthesis; thiamine diphosphate biosynthesis. In terms of biological role, catalyzes the synthesis of the hydroxymethylpyrimidine phosphate (HMP-P) moiety of thiamine from aminoimidazole ribotide (AIR) in a radical S-adenosyl-L-methionine (SAM)-dependent reaction. The chain is Phosphomethylpyrimidine synthase from Aromatoleum aromaticum (strain DSM 19018 / LMG 30748 / EbN1) (Azoarcus sp. (strain EbN1)).